Consider the following 322-residue polypeptide: tRNA U34 carboxymethyltransferase (322 aa).

The carboxy-S-adenosyl-L-methionine site is built by Lys-91, Trp-105, Lys-110, Gly-129, Met-195, Tyr-199, and Arg-314.

The protein belongs to the class I-like SAM-binding methyltransferase superfamily. CmoB family. In terms of assembly, homotetramer.

It carries out the reaction carboxy-S-adenosyl-L-methionine + 5-hydroxyuridine(34) in tRNA = 5-carboxymethoxyuridine(34) in tRNA + S-adenosyl-L-homocysteine + H(+). Catalyzes carboxymethyl transfer from carboxy-S-adenosyl-L-methionine (Cx-SAM) to 5-hydroxyuridine (ho5U) to form 5-carboxymethoxyuridine (cmo5U) at position 34 in tRNAs. The chain is tRNA U34 carboxymethyltransferase from Ectopseudomonas mendocina (strain ymp) (Pseudomonas mendocina).